We begin with the raw amino-acid sequence, 362 residues long: Phosphoserine aminotransferase (362 aa).

R43 serves as a coordination point for L-glutamate. Pyridoxal 5'-phosphate contacts are provided by residues 77 to 78 (AR), W103, T153, D173, and Q196. An N6-(pyridoxal phosphate)lysine modification is found at K197.

This sequence belongs to the class-V pyridoxal-phosphate-dependent aminotransferase family. SerC subfamily. Homodimer. Pyridoxal 5'-phosphate is required as a cofactor.

It is found in the cytoplasm. The enzyme catalyses O-phospho-L-serine + 2-oxoglutarate = 3-phosphooxypyruvate + L-glutamate. The catalysed reaction is 4-(phosphooxy)-L-threonine + 2-oxoglutarate = (R)-3-hydroxy-2-oxo-4-phosphooxybutanoate + L-glutamate. Its pathway is amino-acid biosynthesis; L-serine biosynthesis; L-serine from 3-phospho-D-glycerate: step 2/3. It participates in cofactor biosynthesis; pyridoxine 5'-phosphate biosynthesis; pyridoxine 5'-phosphate from D-erythrose 4-phosphate: step 3/5. Functionally, catalyzes the reversible conversion of 3-phosphohydroxypyruvate to phosphoserine and of 3-hydroxy-2-oxo-4-phosphonooxybutanoate to phosphohydroxythreonine. The chain is Phosphoserine aminotransferase from Legionella pneumophila (strain Paris).